Reading from the N-terminus, the 380-residue chain is MSMDFSPLLTVLEGDFNKDNTSSATEIDTLENLDDTRQISKGKPPRHLTSSATRLQLAANADVDVCNLVMKSLDDKSEFLPVYRSGSCAEQGAKQFMEDEHICIDDLVNHLGAAIQCSSLGAFYGVFDGHGGTDAAHFVRKNILRFIVEDSSFPLCVKKAIKSAFLKADYEFADDSSLDISSGTTALTAFIFGRRLIIANAGDCRAVLGRRGRAIELSKDHKPNCTAEKVRIEKLGGVVYDGYLNGQLSVARAIGDWHMKGPKGSACPLSPEPELQETDLSEDDEFLIMGCDGLWDVMSSQCAVTIARKELMIHNDPERCSRELVREALKRNTCDNLTVIVVCFSPDPPQRIEIRMQSRVRRSISAEGLNLLKGVLDGYP.

Positions 84–344 constitute a PPM-type phosphatase domain; the sequence is RSGSCAEQGA…DNLTVIVVCF (261 aa). Residues Asp-128, Gly-129, Asp-292, and Asp-335 each coordinate Mn(2+).

The protein belongs to the PP2C family. Mg(2+) serves as cofactor. Mn(2+) is required as a cofactor. In terms of tissue distribution, expressed in roots, leaves, stems, flower, and trichomes.

The protein resides in the nucleus. Its subcellular location is the cytoplasm. The enzyme catalyses O-phospho-L-seryl-[protein] + H2O = L-seryl-[protein] + phosphate. It carries out the reaction O-phospho-L-threonyl-[protein] + H2O = L-threonyl-[protein] + phosphate. Functionally, confers salt tolerance by triggering the expression of stress-responsive genes. The polypeptide is Probable protein phosphatase 2C 27 (Arabidopsis thaliana (Mouse-ear cress)).